We begin with the raw amino-acid sequence, 233 residues long: Large ribosomal subunit protein uL1 (233 aa).

It belongs to the universal ribosomal protein uL1 family. As to quaternary structure, part of the 50S ribosomal subunit.

In terms of biological role, binds directly to 23S rRNA. The L1 stalk is quite mobile in the ribosome, and is involved in E site tRNA release. Its function is as follows. Protein L1 is also a translational repressor protein, it controls the translation of the L11 operon by binding to its mRNA. The polypeptide is Large ribosomal subunit protein uL1 (Thermotoga maritima (strain ATCC 43589 / DSM 3109 / JCM 10099 / NBRC 100826 / MSB8)).